The primary structure comprises 425 residues: Serine--tRNA ligase (425 aa).

230–232 (TAE) lines the L-serine pocket. An ATP-binding site is contributed by 261-263 (RSE). Glu-284 contributes to the L-serine binding site. Residue 348 to 351 (EISS) participates in ATP binding. Ser-384 provides a ligand contact to L-serine.

This sequence belongs to the class-II aminoacyl-tRNA synthetase family. Type-1 seryl-tRNA synthetase subfamily. In terms of assembly, homodimer. The tRNA molecule binds across the dimer.

It is found in the cytoplasm. It carries out the reaction tRNA(Ser) + L-serine + ATP = L-seryl-tRNA(Ser) + AMP + diphosphate + H(+). The catalysed reaction is tRNA(Sec) + L-serine + ATP = L-seryl-tRNA(Sec) + AMP + diphosphate + H(+). The protein operates within aminoacyl-tRNA biosynthesis; selenocysteinyl-tRNA(Sec) biosynthesis; L-seryl-tRNA(Sec) from L-serine and tRNA(Sec): step 1/1. In terms of biological role, catalyzes the attachment of serine to tRNA(Ser). Is also able to aminoacylate tRNA(Sec) with serine, to form the misacylated tRNA L-seryl-tRNA(Sec), which will be further converted into selenocysteinyl-tRNA(Sec). The protein is Serine--tRNA ligase of Streptococcus pyogenes serotype M2 (strain MGAS10270).